A 245-amino-acid polypeptide reads, in one-letter code: Acetylglutamate kinase (245 aa).

Substrate is bound by residues 41–42 (GG), arginine 63, and asparagine 156.

It belongs to the acetylglutamate kinase family. ArgB subfamily.

The protein localises to the cytoplasm. The catalysed reaction is N-acetyl-L-glutamate + ATP = N-acetyl-L-glutamyl 5-phosphate + ADP. It participates in amino-acid biosynthesis; L-arginine biosynthesis; N(2)-acetyl-L-ornithine from L-glutamate: step 2/4. Functionally, catalyzes the ATP-dependent phosphorylation of N-acetyl-L-glutamate. This chain is Acetylglutamate kinase, found in Leuconostoc citreum (strain KM20).